Reading from the N-terminus, the 281-residue chain is Glutamate racemase (281 aa).

Residues 13 to 14 (DS) and 45 to 46 (YG) each bind substrate. The Proton donor/acceptor role is filled by C76. Residue 77-78 (NT) participates in substrate binding. Residue C185 is the Proton donor/acceptor of the active site. 186–187 (TH) contacts substrate.

The protein belongs to the aspartate/glutamate racemases family.

The catalysed reaction is L-glutamate = D-glutamate. The protein operates within cell wall biogenesis; peptidoglycan biosynthesis. Provides the (R)-glutamate required for cell wall biosynthesis. This chain is Glutamate racemase, found in Rippkaea orientalis (strain PCC 8801 / RF-1) (Cyanothece sp. (strain PCC 8801)).